Reading from the N-terminus, the 666-residue chain is UvrABC system protein B (666 aa).

A Helicase ATP-binding domain is found at 26-183 (DSFQKGAEKV…RKLLHIQYNR (158 aa)). An ATP-binding site is contributed by 39–46 (GVTGSGKT). Residues 92–115 (YYDYYQPEAYVPSSDTFIEKDSSI) carry the Beta-hairpin motif. Residues 429–591 (QIEDLLVEIR…ITPLTIRKEV (163 aa)) form the Helicase C-terminal domain. The UVR domain occupies 625-660 (EVLKDKLREEMMKAAKELDFERAAILRDKMLSIQIN).

This sequence belongs to the UvrB family. In terms of assembly, forms a heterotetramer with UvrA during the search for lesions. Interacts with UvrC in an incision complex.

The protein localises to the cytoplasm. In terms of biological role, the UvrABC repair system catalyzes the recognition and processing of DNA lesions. A damage recognition complex composed of 2 UvrA and 2 UvrB subunits scans DNA for abnormalities. Upon binding of the UvrA(2)B(2) complex to a putative damaged site, the DNA wraps around one UvrB monomer. DNA wrap is dependent on ATP binding by UvrB and probably causes local melting of the DNA helix, facilitating insertion of UvrB beta-hairpin between the DNA strands. Then UvrB probes one DNA strand for the presence of a lesion. If a lesion is found the UvrA subunits dissociate and the UvrB-DNA preincision complex is formed. This complex is subsequently bound by UvrC and the second UvrB is released. If no lesion is found, the DNA wraps around the other UvrB subunit that will check the other stand for damage. This Leptospira borgpetersenii serovar Hardjo-bovis (strain JB197) protein is UvrABC system protein B.